We begin with the raw amino-acid sequence, 180 residues long: Symerythrin (180 aa).

Residues 17–127 (FQDAVSHNNT…RRALETALEV (111 aa)) constitute a cross-link (3-(L-phenylalan-2'-yl)-L-valine (Phe-Val)). Residues 21 to 180 (VSHNNTDANA…RALENLLEVA (160 aa)) form the Ferritin-like diiron domain. 7 residues coordinate Fe(3+): Glu37, Glu40, Glu71, Glu128, Glu131, Glu162, and His165.

In terms of assembly, monomer. It depends on Fe(3+) as a cofactor.

The protein localises to the plastid. It localises to the cyanelle. Its function is as follows. Exhibits oxidase-like and peroxidase-like activities in vitro. The polypeptide is Symerythrin (Cyanophora paradoxa).